A 271-amino-acid polypeptide reads, in one-letter code: Neurexophilin-1 (271 aa).

The first 21 residues, 1-21 (MQAACWYVLLLLQPTVYLVTC), serve as a signal peptide directing secretion. Residues 22–97 (ANLTNGGKSE…WDWLRNSTDL (76 aa)) form an II region. N23, N68, N93, N146, N156, and N162 each carry an N-linked (GlcNAc...) asparagine glycan. Residues 98–176 (QEPRPRAKRR…LVPPTKIVEF (79 aa)) form an III region. Residues 177–185 (DLAQQTVID) are IV (linker domain). Residues 186–271 (AKDSKSFNCR…HSDTPYFPSG (86 aa)) form a v (Cys-rich) region.

This sequence belongs to the neurexophilin family. Post-translationally, may be proteolytically processed at the boundary between the N-terminal non-conserved and the central conserved domain in neuron-like cells.

It is found in the secreted. May be signaling molecules that resemble neuropeptides. Ligand for alpha-neurexins. The polypeptide is Neurexophilin-1 (NXPH1) (Bos taurus (Bovine)).